The sequence spans 297 residues: Nicotinate-nucleotide pyrophosphorylase [carboxylating] (297 aa).

Positions leucine 8–proline 12 are important for hexamer formation. Quinolinate contacts are provided by residues arginine 102, arginine 138–lysine 139, histidine 160–arginine 161, lysine 171, glutamate 201, aspartate 222, serine 248–glycine 250, and glycine 270.

The protein belongs to the NadC/ModD family. As to quaternary structure, hexamer formed by 3 homodimers.

The catalysed reaction is nicotinate beta-D-ribonucleotide + CO2 + diphosphate = quinolinate + 5-phospho-alpha-D-ribose 1-diphosphate + 2 H(+). It participates in cofactor biosynthesis; NAD(+) biosynthesis; nicotinate D-ribonucleotide from quinolinate: step 1/1. Its activity is regulated as follows. Activity toward QA is slightly repressed by phosphoribosylpyrophosphate (PRPP) in both a competitive and a non-competitive manner. Competitively inhibited by phthalic acid (PHT). Its function is as follows. Involved in the catabolism of quinolinic acid (QA). The protein is Nicotinate-nucleotide pyrophosphorylase [carboxylating] (QPRT) of Homo sapiens (Human).